The following is a 442-amino-acid chain: MKKVFIRTFGCQMNEYDSEKMLSVLAEEHGGIEQVTQADEADIILFNTCSVREKAQEKVFSDLGRVRPLKEKNPGLIIGVAGCVASQEGENIIKRAPYVDVVFGPQTLHRLPKMIVDKETSGLSQVDISFPEIEKFDHLPPARVEGGAAFVSIMEGCSKYCSFCVVPYTRGEEFSRPLNDVLTEIANLAQQGVKEINLLGQNVNAYRGEMDDGEICDFATLLRIVHEIPGIERMRFTTSHPREFTDSIIECYRDLPKLVSHLHLPIQSGSDRVLSAMKRGYTALEYKSIIRKLRAIRPDLCLSSDFIVGFPGETEREFEQTLKLVKDIAFDLSFVFIYSPRPGTPAANLPDDTPHEEKVRRLEALNEVIEAETARINQTMIGTVQRCLVEGISKKDPDQLQARTVNNRVVNFTGTPDMINQMIDLEITEAYTFSLRGKIVEA.

In terms of domain architecture, MTTase N-terminal spans 2 to 120; that stretch reads KKVFIRTFGC…LPKMIVDKET (119 aa). Residues Cys11, Cys49, Cys83, Cys157, Cys161, and Cys164 each coordinate [4Fe-4S] cluster. Residues 143–375 enclose the Radical SAM core domain; the sequence is RVEGGAAFVS…NEVIEAETAR (233 aa). The region spanning 378 to 441 is the TRAM domain; it reads QTMIGTVQRC…TFSLRGKIVE (64 aa).

This sequence belongs to the methylthiotransferase family. MiaB subfamily. Monomer. [4Fe-4S] cluster serves as cofactor.

The protein localises to the cytoplasm. The enzyme catalyses N(6)-dimethylallyladenosine(37) in tRNA + (sulfur carrier)-SH + AH2 + 2 S-adenosyl-L-methionine = 2-methylsulfanyl-N(6)-dimethylallyladenosine(37) in tRNA + (sulfur carrier)-H + 5'-deoxyadenosine + L-methionine + A + S-adenosyl-L-homocysteine + 2 H(+). Functionally, catalyzes the methylthiolation of N6-(dimethylallyl)adenosine (i(6)A), leading to the formation of 2-methylthio-N6-(dimethylallyl)adenosine (ms(2)i(6)A) at position 37 in tRNAs that read codons beginning with uridine. The protein is tRNA-2-methylthio-N(6)-dimethylallyladenosine synthase of Neisseria gonorrhoeae (strain ATCC 700825 / FA 1090).